The chain runs to 531 residues: Inactive beta-amylase 4, chloroplastic (531 aa).

The N-terminal 62 residues, 1–62 (MTETGVIGCG…KRGRFITKLR (62 aa)), are a transit peptide targeting the chloroplast.

Belongs to the glycosyl hydrolase 14 family. Preferentially expressed in vascular tissue of cotyledons, leaves, petioles, stems, petals, siliques and roots, particularly in phloem. Also present in root tip.

The protein resides in the plastid. Its subcellular location is the chloroplast. In terms of biological role, no alpha-1,4-glucan hydrolase activity, including beta-amylase, alpha-amylase, a-glucosidase or alpha-amyloglucosidase. However, facilitates or regulates starch breakdown, especially at night, by a mechanism involving direct interaction with starch or other alpha-1,4-glucan. This chain is Inactive beta-amylase 4, chloroplastic (BAM4), found in Arabidopsis thaliana (Mouse-ear cress).